A 515-amino-acid polypeptide reads, in one-letter code: Bifunctional purine biosynthesis protein PurH (515 aa).

An MGS-like domain is found at 1–145; the sequence is MTKRALISVS…KNHASVTVVV (145 aa).

Belongs to the PurH family.

It carries out the reaction (6R)-10-formyltetrahydrofolate + 5-amino-1-(5-phospho-beta-D-ribosyl)imidazole-4-carboxamide = 5-formamido-1-(5-phospho-D-ribosyl)imidazole-4-carboxamide + (6S)-5,6,7,8-tetrahydrofolate. It catalyses the reaction IMP + H2O = 5-formamido-1-(5-phospho-D-ribosyl)imidazole-4-carboxamide. It participates in purine metabolism; IMP biosynthesis via de novo pathway; 5-formamido-1-(5-phospho-D-ribosyl)imidazole-4-carboxamide from 5-amino-1-(5-phospho-D-ribosyl)imidazole-4-carboxamide (10-formyl THF route): step 1/1. Its pathway is purine metabolism; IMP biosynthesis via de novo pathway; IMP from 5-formamido-1-(5-phospho-D-ribosyl)imidazole-4-carboxamide: step 1/1. This chain is Bifunctional purine biosynthesis protein PurH, found in Streptococcus mutans serotype c (strain ATCC 700610 / UA159).